Consider the following 419-residue polypeptide: Zinc metalloproteinase-disintegrin-like atrolysin-A (419 aa).

The Peptidase M12B domain maps to 6 to 202; sequence RYVELVIVAD…YNPQCILNEP (197 aa). Glu9 lines the Ca(2+) pocket. N-linked (GlcNAc...) asparagine glycosylation is present at Asn72. Asp93 is a binding site for Ca(2+). 3 cysteine pairs are disulfide-bonded: Cys117-Cys197, Cys157-Cys181, and Cys159-Cys164. Residue His142 coordinates Zn(2+). Glu143 is a catalytic residue. Residues His146 and His152 each coordinate Zn(2+). Ca(2+) is bound by residues Cys197, Asn200, Val212, Asn215, Leu217, Glu219, Glu222, and Asp225. The 87-residue stretch at 210–296 folds into the Disintegrin domain; the sequence is PPVCGNELLE…DCPTDDFHRN (87 aa). 14 cysteine pairs are disulfide-bonded: Cys213-Cys242, Cys224-Cys237, Cys226-Cys232, Cys236-Cys259, Cys250-Cys256, Cys255-Cys281, Cys268-Cys288, Cys275-Cys307, Cys300-Cys312, Cys319-Cys369, Cys334-Cys376, Cys347-Cys357, Cys364-Cys398, and Cys392-Cys403. Positions 274 to 276 match the D/ECD-tripeptide motif; it reads ECD. Asn326, Asn338, and Asn342 each carry an N-linked (GlcNAc...) asparagine glycan.

The protein belongs to the venom metalloproteinase (M12B) family. P-III subfamily. P-IIIa sub-subfamily. Monomer. The cofactor is Zn(2+). Expressed by the venom gland.

Its subcellular location is the secreted. The catalysed reaction is Cleavage of 3-Asn-|-Gln-4, 5-His-|-Leu-6, 10-His-|-Leu-11, 14-Ala-|-Leu-15 and 16-Tyr-|-Leu-17 in insulin B chain. Removes C-terminal Leu from small peptides.. In terms of biological role, snake venom zinc metalloproteinase-disintegrin that causes hemorrhage by provoking the degradation of the sub-endothelial matrix proteins (fibronectin, laminin, type IV collagen, nidogen, and gelatins) and disturbances in platelet function. The recombinant cysteine-rich domain interacts with the alpha-2/beta-1 integrin (ITGA2/ITGB1) (collagen receptor), and inhibits the platelet aggregation induced by collagen. The polypeptide is Zinc metalloproteinase-disintegrin-like atrolysin-A (Crotalus atrox (Western diamondback rattlesnake)).